The primary structure comprises 283 residues: Elongation factor Ts (283 aa).

Positions 79–82 (TDFV) are involved in Mg(2+) ion dislocation from EF-Tu.

It belongs to the EF-Ts family.

The protein localises to the cytoplasm. In terms of biological role, associates with the EF-Tu.GDP complex and induces the exchange of GDP to GTP. It remains bound to the aminoacyl-tRNA.EF-Tu.GTP complex up to the GTP hydrolysis stage on the ribosome. In Shewanella baltica (strain OS155 / ATCC BAA-1091), this protein is Elongation factor Ts.